A 451-amino-acid chain; its full sequence is MFLGEDYLLTNRAAVRLFSEVKDLPIVDPHNHLDAKDIVENKPWNDIWEVEGATDHYVWELMRRCGVPEEYITGSRSNREKWLALAKVFPKFVGNPTYEWIHLDLWRRFNVKKVISEETAEEIWEETKRMLPEMTPQKLLKDMKVEILCTTDDPISTLEYHRKARETIKDVTILPTWRPDRAMNVEKSDWKDYVKKIGEIYNEDTSTLEGFLSALWKSHEHFKEHGCVASDHALLEPSIHFVGEKTARKIHEKVFRGKELDPEEIRDYKAFMMVQFGKMNQETGWVTQLHIGALRDYRDSLLKTLGPDSGGDISTNFLKIAEGLRYFLNEFDGKLKIVLYVLDPTHLPTIATIARAFPNVYIGAPWWFNDSPFGMEMHLKYVASVDLLYNLAGMVTDSRKLLSFGSRTEMFRRVLSSVVGEMVERGQIPIREAKELVKHVCYDGPKALFFG.

It belongs to the metallo-dependent hydrolases superfamily. Uronate isomerase family.

It carries out the reaction D-glucuronate = D-fructuronate. It catalyses the reaction aldehydo-D-galacturonate = keto-D-tagaturonate. The protein operates within carbohydrate metabolism; pentose and glucuronate interconversion. This chain is Uronate isomerase, found in Thermotoga neapolitana (strain ATCC 49049 / DSM 4359 / NBRC 107923 / NS-E).